The sequence spans 532 residues: uncharacterized protein (532 aa).

Disordered stretches follow at residues 26–84 (KALR…TDSE), 97–129 (VFDE…QVGR), and 157–470 (SKAA…HTCQ). Low complexity predominate over residues 30–40 (GNNNGSSTSGG). A compositionally biased stretch (polar residues) spans 67-80 (DIISQARRQVSLSR). A compositionally biased stretch (basic and acidic residues) spans 157–181 (SKAAGEESKRHAHFESIQEEEKISE). The span at 198-213 (IQSGSESSDSDSIIFD) shows a compositional bias: low complexity. Residues 237–249 (VEKKIEKPAVKEQ) are compositionally biased toward basic and acidic residues. Composition is skewed to low complexity over residues 259–290 (PTPT…SASE), 298–315 (ESQV…SSSK), and 326–335 (SSSSSASTIS). A compositionally biased stretch (basic residues) spans 347-356 (KTKKPDKKRA). 4 stretches are compositionally biased toward basic and acidic residues: residues 357–368 (KPDDIRQNKKPE), 389–403 (STVR…ESLK), 410–419 (KSSEKMEKPR), and 437–448 (RDAEREQDIERR). The span at 449 to 461 (REKRARRFRSRRR) shows a compositional bias: basic residues.

This is an uncharacterized protein from Caenorhabditis elegans.